Here is a 621-residue protein sequence, read N- to C-terminus: tRNA uridine 5-carboxymethylaminomethyl modification enzyme MnmG (621 aa).

An FAD-binding site is contributed by 11-16; sequence GAGHAG. 271–285 is a binding site for NAD(+); it reads GPRYCPSVEDKINRF.

Belongs to the MnmG family. As to quaternary structure, homodimer. Heterotetramer of two MnmE and two MnmG subunits. Requires FAD as cofactor.

The protein resides in the cytoplasm. In terms of biological role, NAD-binding protein involved in the addition of a carboxymethylaminomethyl (cmnm) group at the wobble position (U34) of certain tRNAs, forming tRNA-cmnm(5)s(2)U34. The chain is tRNA uridine 5-carboxymethylaminomethyl modification enzyme MnmG from Cytophaga hutchinsonii (strain ATCC 33406 / DSM 1761 / CIP 103989 / NBRC 15051 / NCIMB 9469 / D465).